Here is a 321-residue protein sequence, read N- to C-terminus: Cytochrome f (321 aa).

The N-terminal stretch at Met-1–Ala-35 is a signal peptide. Heme contacts are provided by Tyr-36, Cys-56, Cys-59, and His-60. The chain crosses the membrane as a helical span at residues Ile-287–Leu-306.

This sequence belongs to the cytochrome f family. In terms of assembly, the 4 large subunits of the cytochrome b6-f complex are cytochrome b6, subunit IV (17 kDa polypeptide, petD), cytochrome f and the Rieske protein, while the 4 small subunits are PetG, PetL, PetM and PetN. The complex functions as a dimer. Requires heme as cofactor.

The protein localises to the plastid. Its subcellular location is the chloroplast thylakoid membrane. Its function is as follows. Component of the cytochrome b6-f complex, which mediates electron transfer between photosystem II (PSII) and photosystem I (PSI), cyclic electron flow around PSI, and state transitions. This Psilotum nudum (Whisk fern) protein is Cytochrome f.